We begin with the raw amino-acid sequence, 62 residues long: Omega-conotoxin-like Bu11 (62 aa).

The first 7 residues, alanine 1–alanine 7, serve as a signal peptide directing secretion. Positions glutamate 8–lysine 27 are excised as a propeptide. Intrachain disulfides connect cysteine 31/cysteine 46, cysteine 38/cysteine 49, and cysteine 45/cysteine 56.

Belongs to the conotoxin O1 superfamily. In terms of tissue distribution, expressed by the venom duct.

The protein resides in the secreted. Omega-conotoxins act at presynaptic membranes, they bind and block voltage-gated calcium channels (Cav). In Conus bullatus (Bubble cone), this protein is Omega-conotoxin-like Bu11.